Consider the following 210-residue polypeptide: Large ribosomal subunit protein uL3 (210 aa).

Belongs to the universal ribosomal protein uL3 family. In terms of assembly, part of the 50S ribosomal subunit. Forms a cluster with proteins L14 and L19.

One of the primary rRNA binding proteins, it binds directly near the 3'-end of the 23S rRNA, where it nucleates assembly of the 50S subunit. In Solibacter usitatus (strain Ellin6076), this protein is Large ribosomal subunit protein uL3.